A 342-amino-acid polypeptide reads, in one-letter code: Replication factor C subunit 4 (342 aa).

ATP contacts are provided by residues valine 24, valine 36, 61-68, asparagine 157, and arginine 215; that span reads GMPGIGKT.

Belongs to the activator 1 small subunits family. Heteropentamer of subunits rfc1, rfc2, rfc3, rfc4 and rfc5 that forms a complex (RFC) with PCNA in the presence of ATP. Two other complexes exist where rfc1 can be replaced by either ctf18 or elg1 to form the ctf18-RFC or the elg1-RFC complexes respectively.

Its subcellular location is the nucleus. Functionally, the elongation of primed DNA templates by DNA polymerase delta and epsilon requires the action of the accessory proteins PCNA and activator 1. This Schizosaccharomyces pombe (strain 972 / ATCC 24843) (Fission yeast) protein is Replication factor C subunit 4 (rfc4).